A 469-amino-acid polypeptide reads, in one-letter code: MSDIRVRFAPSPTGYLHVGGARTALFNWLLARKQGGTFILRIEDTDVERSTQESVDAILQGMEWLGLDWDEGPFYQTDNFPLYREYIQKLLDEGKAYRCYCTAEELEAKRELAMKEGRKPKYDGTCRDLTEQPADRPFVVRFRAPQDGGATSFNDLIKGTITFPNDELDDLIVQRSDGTPTYNFCVVIDDAIMKITTVIRGDDHVNNTPRQVQLYQALGFPVPQFAHVPMILGSDKARLSKRHGATSVIAYRDMGFLPEALMNYLVRLGWSHGDDEIFSRDEMVAKFDISNVGRSPSVFNPDKLLWLNAHYIKHGDPQRLADLLVPFLKMRGVDPANGGPQLAVAIKTLQERARTMLEMADSALFYYHAPESYDRTALAKFEKEHLLAVYATVAEKLSAATAVTAAEFDALFKEICAEKGWKMPQVGQPVRIALSGGTHAPGIGEIIVTLGKEETIQRIQRAREFVEKQ.

The 'HIGH' region motif lies at 10–20 (PSPTGYLHVGG). C99, C101, C126, and D128 together coordinate Zn(2+). The 'KMSKS' region motif lies at 238-242 (RLSKR). K241 is a binding site for ATP.

It belongs to the class-I aminoacyl-tRNA synthetase family. Glutamate--tRNA ligase type 1 subfamily. Monomer. It depends on Zn(2+) as a cofactor.

It localises to the cytoplasm. It carries out the reaction tRNA(Glu) + L-glutamate + ATP = L-glutamyl-tRNA(Glu) + AMP + diphosphate. Functionally, catalyzes the attachment of glutamate to tRNA(Glu) in a two-step reaction: glutamate is first activated by ATP to form Glu-AMP and then transferred to the acceptor end of tRNA(Glu). The polypeptide is Glutamate--tRNA ligase (Pelobacter propionicus (strain DSM 2379 / NBRC 103807 / OttBd1)).